The chain runs to 776 residues: Ribosomal RNA large subunit methyltransferase K/L (776 aa).

The THUMP domain occupies Asp-68 to Leu-183.

This sequence belongs to the methyltransferase superfamily. RlmKL family.

Its subcellular location is the cytoplasm. The enzyme catalyses guanosine(2445) in 23S rRNA + S-adenosyl-L-methionine = N(2)-methylguanosine(2445) in 23S rRNA + S-adenosyl-L-homocysteine + H(+). The catalysed reaction is guanosine(2069) in 23S rRNA + S-adenosyl-L-methionine = N(2)-methylguanosine(2069) in 23S rRNA + S-adenosyl-L-homocysteine + H(+). In terms of biological role, specifically methylates the guanine in position 2445 (m2G2445) and the guanine in position 2069 (m7G2069) of 23S rRNA. The sequence is that of Ribosomal RNA large subunit methyltransferase K/L from Psychrobacter cryohalolentis (strain ATCC BAA-1226 / DSM 17306 / VKM B-2378 / K5).